A 77-amino-acid chain; its full sequence is Translation initiation factor IF-1, chloroplastic (77 aa).

An S1-like domain is found at 1 to 71; sequence MKEQKWTHEG…TRGRIIYRLR (71 aa).

It belongs to the IF-1 family. In terms of assembly, component of the 30S ribosomal translation pre-initiation complex which assembles on the 30S ribosome in the order IF-2 and IF-3, IF-1 and N-formylmethionyl-tRNA(fMet); mRNA recruitment can occur at any time during PIC assembly.

The protein resides in the plastid. It localises to the chloroplast. In terms of biological role, one of the essential components for the initiation of protein synthesis. Stabilizes the binding of IF-2 and IF-3 on the 30S subunit to which N-formylmethionyl-tRNA(fMet) subsequently binds. Helps modulate mRNA selection, yielding the 30S pre-initiation complex (PIC). Upon addition of the 50S ribosomal subunit IF-1, IF-2 and IF-3 are released leaving the mature 70S translation initiation complex. The polypeptide is Translation initiation factor IF-1, chloroplastic (Coffea arabica (Arabian coffee)).